The primary structure comprises 136 residues: Putative LysR family substrate binding domain-containing protein YagP (136 aa).

Belongs to the LysR transcriptional regulatory family.

The sequence is that of Putative LysR family substrate binding domain-containing protein YagP (yagP) from Escherichia coli (strain K12).